The primary structure comprises 315 residues: Tubulin beta-1 chain (315 aa).

Residues S6, G10, T11, G12, N72, and N94 each contribute to the GTP site. Residues 295 to 315 (DATADEEEYYEDEEEEEAQGM) are disordered. Over residues 297–315 (TADEEEYYEDEEEEEAQGM) the composition is skewed to acidic residues.

Belongs to the tubulin family. In terms of assembly, dimer of alpha and beta chains. A typical microtubule is a hollow water-filled tube with an outer diameter of 25 nm and an inner diameter of 15 nM. Alpha-beta heterodimers associate head-to-tail to form protofilaments running lengthwise along the microtubule wall with the beta-tubulin subunit facing the microtubule plus end conferring a structural polarity. Microtubules usually have 13 protofilaments but different protofilament numbers can be found in some organisms and specialized cells. The cofactor is Mg(2+).

The protein localises to the cytoplasm. The protein resides in the cytoskeleton. Tubulin is the major constituent of microtubules, a cylinder consisting of laterally associated linear protofilaments composed of alpha- and beta-tubulin heterodimers. Microtubules grow by the addition of GTP-tubulin dimers to the microtubule end, where a stabilizing cap forms. Below the cap, tubulin dimers are in GDP-bound state, owing to GTPase activity of alpha-tubulin. This Daucus carota (Wild carrot) protein is Tubulin beta-1 chain (TUBB1).